Consider the following 122-residue polypeptide: MIKRRDRKELRRKRHLRVRSKIKGTPERPRLAVYRSERHIYAQIIDDIAGRTIVSASTVDKELREKLTKTWNQEAAKEVGKLIAKRAAEKGIKKIVFDRGGFKFHGRIKSLADAAREAGLEF.

This sequence belongs to the universal ribosomal protein uL18 family. As to quaternary structure, part of the 50S ribosomal subunit; part of the 5S rRNA/L5/L18/L25 subcomplex. Contacts the 5S and 23S rRNAs.

In terms of biological role, this is one of the proteins that bind and probably mediate the attachment of the 5S RNA into the large ribosomal subunit, where it forms part of the central protuberance. The protein is Large ribosomal subunit protein uL18 of Kosmotoga olearia (strain ATCC BAA-1733 / DSM 21960 / TBF 19.5.1).